Consider the following 473-residue polypeptide: 3-isopropylmalate dehydratase large subunit (473 aa).

Residues Cys-353, Cys-414, and Cys-417 each contribute to the [4Fe-4S] cluster site.

Belongs to the aconitase/IPM isomerase family. LeuC type 1 subfamily. As to quaternary structure, heterodimer of LeuC and LeuD. [4Fe-4S] cluster is required as a cofactor.

The enzyme catalyses (2R,3S)-3-isopropylmalate = (2S)-2-isopropylmalate. Its pathway is amino-acid biosynthesis; L-leucine biosynthesis; L-leucine from 3-methyl-2-oxobutanoate: step 2/4. Functionally, catalyzes the isomerization between 2-isopropylmalate and 3-isopropylmalate, via the formation of 2-isopropylmaleate. In Cellvibrio japonicus (strain Ueda107) (Pseudomonas fluorescens subsp. cellulosa), this protein is 3-isopropylmalate dehydratase large subunit.